The following is a 298-amino-acid chain: Homoserine kinase (298 aa).

Residue 83–93 (PISRGLGSSSS) coordinates ATP.

This sequence belongs to the GHMP kinase family. Homoserine kinase subfamily.

The protein localises to the cytoplasm. It catalyses the reaction L-homoserine + ATP = O-phospho-L-homoserine + ADP + H(+). Its pathway is amino-acid biosynthesis; L-threonine biosynthesis; L-threonine from L-aspartate: step 4/5. Its function is as follows. Catalyzes the ATP-dependent phosphorylation of L-homoserine to L-homoserine phosphate. The protein is Homoserine kinase of Clostridium botulinum (strain Eklund 17B / Type B).